A 348-amino-acid polypeptide reads, in one-letter code: Adenosine deaminase (348 aa).

Positions 16 and 18 each coordinate Zn(2+). Residues H18, D20, and G174 each coordinate substrate. Residue H201 coordinates Zn(2+). The Proton donor role is filled by E204. Zn(2+) is bound at residue D282.

This sequence belongs to the metallo-dependent hydrolases superfamily. Adenosine and AMP deaminases family. Adenosine deaminase subfamily. The cofactor is Zn(2+).

The catalysed reaction is adenosine + H2O + H(+) = inosine + NH4(+). The enzyme catalyses 2'-deoxyadenosine + H2O + H(+) = 2'-deoxyinosine + NH4(+). Its function is as follows. Catalyzes the hydrolytic deamination of adenosine and 2-deoxyadenosine. The chain is Adenosine deaminase from Clostridium kluyveri (strain ATCC 8527 / DSM 555 / NBRC 12016 / NCIMB 10680 / K1).